Consider the following 151-residue polypeptide: Large ribosomal subunit protein eL19 (151 aa).

Residues 57–81 are compositionally biased toward basic residues; that stretch reads KKGISSARVKKLKEQRKKGRRRGPG. The interval 57–95 is disordered; that stretch reads KKGISSARVKKLKEQRKKGRRRGPGSRRGAAGARTPPKE.

Belongs to the eukaryotic ribosomal protein eL19 family. In terms of assembly, part of the 50S ribosomal subunit.

Functionally, binds to the 23S rRNA. In Methanocaldococcus jannaschii (strain ATCC 43067 / DSM 2661 / JAL-1 / JCM 10045 / NBRC 100440) (Methanococcus jannaschii), this protein is Large ribosomal subunit protein eL19.